The sequence spans 1663 residues: Glutamine-rich protein 2 (1663 aa).

Disordered stretches follow at residues 80-239 (HGGF…LVPA), 423-481 (GLVQ…GTGQ), 575-615 (AQPR…QHGL), 880-925 (TYQQ…QVYP), and 948-984 (RGPG…APGQ). 2 stretches are compositionally biased toward polar residues: residues 84-103 (TSLT…QPSI) and 131-150 (GVSS…QQQP). Over residues 171 to 182 (SDSDRHRSREKL) the composition is skewed to basic and acidic residues. Over residues 206 to 217 (QPSSVPASQSQV) the composition is skewed to low complexity. Positions 958-975 (HGQEGLDPNRTRASDRHG) are enriched in basic and acidic residues. 2 coiled-coil regions span residues 1085–1160 (KTVK…MENS) and 1286–1325 (EDHR…KADK). A compositionally biased stretch (basic and acidic residues) spans 1609-1619 (TRLPGILRKDS). Residues 1609–1663 (TRLPGILRKDSSGTSKRKSQQPRPHVHRPPSLSSNGQLPSRPQSAQISAGNTSER) form a disordered region. The span at 1623 to 1636 (SKRKSQQPRPHVHR) shows a compositional bias: basic residues. The segment covering 1639–1663 (SLSSNGQLPSRPQSAQISAGNTSER) has biased composition (polar residues).

In terms of assembly, interacts with AKAP3, ODF2 and TSSK4. Interacts with AKAP4. Expressed in the sperm.

The protein resides in the nucleus membrane. It localises to the nucleus. Its subcellular location is the cytoplasm. It is found in the cell projection. The protein localises to the cilium. The protein resides in the flagellum. Its function is as follows. Has an essential role in the formation of sperm flagella and flagellar structure maintainance. It acts as a suppressor of ubiquitination and degradation of proteins involved in flagellar development and motility. This is Glutamine-rich protein 2 (QRICH2) from Homo sapiens (Human).